We begin with the raw amino-acid sequence, 1385 residues long: DNA-directed RNA polymerase subunit beta' (1385 aa).

The Zn(2+) site is built by Cys72, Cys74, Cys87, and Cys90. Mg(2+)-binding residues include Asp463, Asp465, and Asp467. Zn(2+) contacts are provided by Cys813, Cys887, Cys894, and Cys897.

This sequence belongs to the RNA polymerase beta' chain family. In terms of assembly, the RNAP catalytic core consists of 2 alpha, 1 beta, 1 beta' and 1 omega subunit. When a sigma factor is associated with the core the holoenzyme is formed, which can initiate transcription. Requires Mg(2+) as cofactor. It depends on Zn(2+) as a cofactor.

The catalysed reaction is RNA(n) + a ribonucleoside 5'-triphosphate = RNA(n+1) + diphosphate. DNA-dependent RNA polymerase catalyzes the transcription of DNA into RNA using the four ribonucleoside triphosphates as substrates. This Trichlorobacter lovleyi (strain ATCC BAA-1151 / DSM 17278 / SZ) (Geobacter lovleyi) protein is DNA-directed RNA polymerase subunit beta'.